Reading from the N-terminus, the 182-residue chain is ATP synthase subunit delta (182 aa).

It belongs to the ATPase delta chain family. As to quaternary structure, F-type ATPases have 2 components, F(1) - the catalytic core - and F(0) - the membrane proton channel. F(1) has five subunits: alpha(3), beta(3), gamma(1), delta(1), epsilon(1). F(0) has three main subunits: a(1), b(2) and c(10-14). The alpha and beta chains form an alternating ring which encloses part of the gamma chain. F(1) is attached to F(0) by a central stalk formed by the gamma and epsilon chains, while a peripheral stalk is formed by the delta and b chains.

It is found in the cell inner membrane. Functionally, f(1)F(0) ATP synthase produces ATP from ADP in the presence of a proton or sodium gradient. F-type ATPases consist of two structural domains, F(1) containing the extramembraneous catalytic core and F(0) containing the membrane proton channel, linked together by a central stalk and a peripheral stalk. During catalysis, ATP synthesis in the catalytic domain of F(1) is coupled via a rotary mechanism of the central stalk subunits to proton translocation. This protein is part of the stalk that links CF(0) to CF(1). It either transmits conformational changes from CF(0) to CF(1) or is implicated in proton conduction. This Bdellovibrio bacteriovorus (strain ATCC 15356 / DSM 50701 / NCIMB 9529 / HD100) protein is ATP synthase subunit delta.